A 209-amino-acid polypeptide reads, in one-letter code: Glycerol-3-phosphate acyltransferase (209 aa).

The next 5 membrane-spanning stretches (helical) occupy residues 5–25, 50–70, 74–94, 115–135, and 151–171; these read IIGM…LWIG, LGFK…TLAA, YFLG…ASLG, ILLA…IFVL, and AIFI…AGIL.

This sequence belongs to the PlsY family. In terms of assembly, probably interacts with PlsX.

It is found in the cell membrane. The enzyme catalyses an acyl phosphate + sn-glycerol 3-phosphate = a 1-acyl-sn-glycero-3-phosphate + phosphate. It functions in the pathway lipid metabolism; phospholipid metabolism. Catalyzes the transfer of an acyl group from acyl-phosphate (acyl-PO(4)) to glycerol-3-phosphate (G3P) to form lysophosphatidic acid (LPA). This enzyme utilizes acyl-phosphate as fatty acyl donor, but not acyl-CoA or acyl-ACP. This Limosilactobacillus reuteri (strain DSM 20016) (Lactobacillus reuteri) protein is Glycerol-3-phosphate acyltransferase.